We begin with the raw amino-acid sequence, 166 residues long: NADH-quinone oxidoreductase subunit B 1 (166 aa).

Residues Cys39, Cys40, Cys106, and Cys135 each coordinate [4Fe-4S] cluster.

This sequence belongs to the complex I 20 kDa subunit family. In terms of assembly, NDH-1 is composed of 14 different subunits. Subunits NuoB, C, D, E, F, and G constitute the peripheral sector of the complex. Requires [4Fe-4S] cluster as cofactor.

The protein resides in the cell membrane. It catalyses the reaction a quinone + NADH + 5 H(+)(in) = a quinol + NAD(+) + 4 H(+)(out). Functionally, NDH-1 shuttles electrons from NADH, via FMN and iron-sulfur (Fe-S) centers, to quinones in the respiratory chain. The immediate electron acceptor for the enzyme in this species is believed to be a menaquinone. Couples the redox reaction to proton translocation (for every two electrons transferred, four hydrogen ions are translocated across the cytoplasmic membrane), and thus conserves the redox energy in a proton gradient. The sequence is that of NADH-quinone oxidoreductase subunit B 1 from Symbiobacterium thermophilum (strain DSM 24528 / JCM 14929 / IAM 14863 / T).